The following is a 193-amino-acid chain: Flagellin B1 (193 aa).

A propeptide spanning residues 1–12 is cleaved from the precursor; that stretch reads MFEFITDEDERG.

This sequence belongs to the archaeal flagellin family. In terms of processing, glycosylated.

The protein localises to the archaeal flagellum. Functionally, flagellin is the subunit protein which polymerizes to form the filaments of archaeal flagella. This chain is Flagellin B1 (flaB1), found in Halobacterium salinarum (strain ATCC 700922 / JCM 11081 / NRC-1) (Halobacterium halobium).